The following is a 166-amino-acid chain: Urease accessory protein UreE (166 aa).

This sequence belongs to the UreE family.

It is found in the cytoplasm. Functionally, involved in urease metallocenter assembly. Binds nickel. Probably functions as a nickel donor during metallocenter assembly. The sequence is that of Urease accessory protein UreE from Pseudomonas fluorescens (strain Pf0-1).